Here is a 210-residue protein sequence, read N- to C-terminus: Protoporphyrinogen IX oxidase (210 aa).

5 helical membrane passes run 22–42 (WFKA…FYLV), 74–94 (YNII…GLIF), 103–123 (GWLH…FYCG), 141–161 (FRAL…LAVF), and 165–185 (LPLD…AASI). H27 contributes to the heme binding site. Residue K108 coordinates heme.

Belongs to the HemJ family. As to quaternary structure, homodimer. Can also form higher oligomers, most probably tetramers. Interacts with Sll1106, however it is unlikely that Sll1106 is required for PPO function. Heme b is required as a cofactor.

It localises to the cell membrane. The catalysed reaction is protoporphyrinogen IX + 3 A = protoporphyrin IX + 3 AH2. It participates in porphyrin-containing compound metabolism; protoporphyrin-IX biosynthesis; protoporphyrin-IX from protoporphyrinogen-IX: step 1/1. In terms of biological role, catalyzes the oxidation of protoporphyrinogen IX to protoporphyrin IX. Is involved in the biosynthesis of tetrapyrrole molecules like heme and chlorophyll. Does not use oxygen or artificial electron acceptors such as menadione or benzoquinone. Is functionally coupled with coproporphyrinogen III oxidase (CPO). Is essential for growth. The chain is Protoporphyrinogen IX oxidase from Synechocystis sp. (strain ATCC 27184 / PCC 6803 / Kazusa).